A 923-amino-acid polypeptide reads, in one-letter code: Tyrosine-protein kinase receptor torso (923 aa).

The first 20 residues, 1 to 20, serve as a signal peptide directing secretion; that stretch reads MLIFYAKYAFIFWFFVGSNQ. The Extracellular portion of the chain corresponds to 21 to 399; sequence GEMLLMDKIS…VLLSEGNMVK (379 aa). N-linked (GlcNAc...) asparagine glycans are attached at residues Asn37, Asn63, Asn107, Asn142, Asn146, Asn287, Asn298, Asn314, Asn326, Asn342, Asn348, and Asn377. Residues 400–420 form a helical membrane-spanning segment; it reads LVLFIIVPICCILMLCSLTFC. The Cytoplasmic segment spans residues 421–923; it reads RRNRSEVQAL…EEELYLEPLN (503 aa). A Protein kinase domain is found at 475 to 874; that stretch reads VLLQDVLGEG…TFSALKHRLG (400 aa). ATP contacts are provided by residues 481–489 and Lys502; that span reads LGEGAFGLV. Ser608 is modified (phosphoserine). Positions 656–687 are disordered; sequence YIPKTAEAPKDRPKRKLKPQPKKDSKQDFKSD. A compositionally biased stretch (basic and acidic residues) spans 676–687; it reads PKKDSKQDFKSD. Asp741 serves as the catalytic Proton acceptor.

Belongs to the protein kinase superfamily. Tyr protein kinase family. Mg(2+) serves as cofactor. In terms of processing, may be auto-phosphorylated on tyrosine residues.

It localises to the membrane. It catalyses the reaction L-tyrosyl-[protein] + ATP = O-phospho-L-tyrosyl-[protein] + ADP + H(+). Probable receptor tyrosine kinase which is required for determination of anterior and posterior terminal structures in the embryo. During postembryonic development, involved in the initiation of metamorphosis probably by inducing the production of ecdysone in response to prothoracicotropic hormone Ptth. Binding to Ptth stimulates activation of canonical MAPK signaling leading to ERK phosphorylation. This chain is Tyrosine-protein kinase receptor torso (tor), found in Drosophila melanogaster (Fruit fly).